Here is a 442-residue protein sequence, read N- to C-terminus: Trigger factor (442 aa).

One can recognise a PPIase FKBP-type domain in the interval 163–248 (GDQVVIDFLG…IKEVKAPKAA (86 aa)).

This sequence belongs to the FKBP-type PPIase family. Tig subfamily.

It localises to the cytoplasm. The catalysed reaction is [protein]-peptidylproline (omega=180) = [protein]-peptidylproline (omega=0). In terms of biological role, involved in protein export. Acts as a chaperone by maintaining the newly synthesized protein in an open conformation. Functions as a peptidyl-prolyl cis-trans isomerase. The chain is Trigger factor from Dinoroseobacter shibae (strain DSM 16493 / NCIMB 14021 / DFL 12).